A 579-amino-acid polypeptide reads, in one-letter code: Kelch repeat and BTB domain-containing protein F47D12.7 (579 aa).

Residues 51-119 (PTVTLVLRNN…PKAFEQGIKP (69 aa)) form the BTB domain. 6 Kelch repeats span residues 266–316 (AIVC…VVED), 317–363 (KLIV…RVND), 369–415 (LVFA…TIDN), 417–463 (IVAI…SIMN), 465–511 (VCMI…QMDT), and 513–559 (YVYV…TLSD).

This Caenorhabditis elegans protein is Kelch repeat and BTB domain-containing protein F47D12.7.